Here is an 83-residue protein sequence, read N- to C-terminus: MKVLILIIASVLLIGVECKDGYPKNSEGCKISCVIGNTFCDTECKMLKASSGYCWTLGLACYCEGLPENVEVWDSATNKCGGK.

The signal sequence occupies residues 1-18 (MKVLILIIASVLLIGVEC). The 63-residue stretch at 19 to 81 (KDGYPKNSEG…VWDSATNKCG (63 aa)) folds into the LCN-type CS-alpha/beta domain. Disulfide bonds link Cys29-Cys80, Cys33-Cys54, Cys40-Cys61, and Cys44-Cys63. Position 81 is a glycine amide (Gly81).

It belongs to the long (4 C-C) scorpion toxin superfamily. Sodium channel inhibitor family. Beta subfamily. Expressed by the venom gland.

It is found in the secreted. Its function is as follows. Beta toxins bind voltage-independently at site-4 of sodium channels (Nav) and shift the voltage of activation toward more negative potentials thereby affecting sodium channel activation and promoting spontaneous and repetitive firing. The chain is Beta-toxin Ct25 from Centruroides tecomanus (Scorpion).